Consider the following 94-residue polypeptide: CRISPR-associated endoribonuclease Cas2 1 (94 aa).

Position 8 (aspartate 8) interacts with Mg(2+).

Belongs to the CRISPR-associated endoribonuclease Cas2 protein family. As to quaternary structure, homodimer, forms a heterotetramer with a Cas1 homodimer. Mg(2+) serves as cofactor.

Its function is as follows. CRISPR (clustered regularly interspaced short palindromic repeat), is an adaptive immune system that provides protection against mobile genetic elements (viruses, transposable elements and conjugative plasmids). CRISPR clusters contain sequences complementary to antecedent mobile elements and target invading nucleic acids. CRISPR clusters are transcribed and processed into CRISPR RNA (crRNA). Involved in the integration of spacer DNA into the CRISPR cassette. Functions as a ssRNA-specific endoribonuclease. The sequence is that of CRISPR-associated endoribonuclease Cas2 1 (cas21) from Archaeoglobus fulgidus (strain ATCC 49558 / DSM 4304 / JCM 9628 / NBRC 100126 / VC-16).